We begin with the raw amino-acid sequence, 1715 residues long: Pentafunctional AROM polypeptide (1715 aa).

Residues 1–17 (MTSTASAQQPVLRTKTP) show a composition bias toward polar residues. Residues 1–26 (MTSTASAQQPVLRTKTPSYHAPPSTD) form a disordered region. Positions 1-421 (MTSTASAQQP…VQNMASTVSD (421 aa)) are 3-dehydroquinate synthase. Residues 71–73 (DQN), 112–115 (EASK), 143–145 (GGV), and Asp148 contribute to the NAD(+) site. Residue Arg159 coordinates 7-phospho-2-dehydro-3-deoxy-D-arabino-heptonate. 168 to 169 (TT) contributes to the NAD(+) binding site. Residues Asp175 and Lys181 each contribute to the 7-phospho-2-dehydro-3-deoxy-D-arabino-heptonate site. Residue Lys190 coordinates NAD(+). Residue Asn191 participates in 7-phospho-2-dehydro-3-deoxy-D-arabino-heptonate binding. NAD(+)-binding positions include 208–211 (WLKT) and Asn219. Glu223 is a Zn(2+) binding site. 7-phospho-2-dehydro-3-deoxy-D-arabino-heptonate-binding positions include 223 to 226 (EVVK) and Lys287. Glu297 serves as the catalytic Proton acceptor; for 3-dehydroquinate synthase activity. 7-phospho-2-dehydro-3-deoxy-D-arabino-heptonate contacts are provided by residues 301-305 (RNLVN) and His308. His308 is a Zn(2+) binding site. The Proton acceptor; for 3-dehydroquinate synthase activity role is filled by His312. 7-phospho-2-dehydro-3-deoxy-D-arabino-heptonate-binding residues include His324 and Lys393. Residue His324 participates in Zn(2+) binding. Residues 434–895 (VTPIHEQPNK…WDDLERKLGI (462 aa)) form an EPSP synthase region. The active-site For EPSP synthase activity is Cys877. The interval 948–1165 (HATIICIGMR…KGGRRTYFLS (218 aa)) is shikimate kinase. Position 955–962 (955–962 (GMRASGKT)) interacts with ATP. The tract at residues 1166-1389 (LTFPDVVPKL…AAPGQLSFRQ (224 aa)) is 3-dehydroquinase. The Proton acceptor; for 3-dehydroquinate dehydratase activity role is filled by His1292. The Schiff-base intermediate with substrate; for 3-dehydroquinate dehydratase activity role is filled by Lys1320. The tract at residues 1402 to 1715 (ARRFALFGSP…AAWDVYLQRC (314 aa)) is shikimate dehydrogenase.

In the N-terminal section; belongs to the sugar phosphate cyclases superfamily. Dehydroquinate synthase family. The protein in the 2nd section; belongs to the EPSP synthase family. It in the 3rd section; belongs to the shikimate kinase family. This sequence in the 4th section; belongs to the type-I 3-dehydroquinase family. In the C-terminal section; belongs to the shikimate dehydrogenase family. Homodimer. The cofactor is Zn(2+).

The protein localises to the cytoplasm. The catalysed reaction is 7-phospho-2-dehydro-3-deoxy-D-arabino-heptonate = 3-dehydroquinate + phosphate. It carries out the reaction 3-dehydroquinate = 3-dehydroshikimate + H2O. It catalyses the reaction shikimate + NADP(+) = 3-dehydroshikimate + NADPH + H(+). The enzyme catalyses shikimate + ATP = 3-phosphoshikimate + ADP + H(+). The catalysed reaction is 3-phosphoshikimate + phosphoenolpyruvate = 5-O-(1-carboxyvinyl)-3-phosphoshikimate + phosphate. Its pathway is metabolic intermediate biosynthesis; chorismate biosynthesis; chorismate from D-erythrose 4-phosphate and phosphoenolpyruvate: step 2/7. It functions in the pathway metabolic intermediate biosynthesis; chorismate biosynthesis; chorismate from D-erythrose 4-phosphate and phosphoenolpyruvate: step 3/7. It participates in metabolic intermediate biosynthesis; chorismate biosynthesis; chorismate from D-erythrose 4-phosphate and phosphoenolpyruvate: step 4/7. The protein operates within metabolic intermediate biosynthesis; chorismate biosynthesis; chorismate from D-erythrose 4-phosphate and phosphoenolpyruvate: step 5/7. Its pathway is metabolic intermediate biosynthesis; chorismate biosynthesis; chorismate from D-erythrose 4-phosphate and phosphoenolpyruvate: step 6/7. Functionally, the AROM polypeptide catalyzes 5 consecutive enzymatic reactions in prechorismate polyaromatic amino acid biosynthesis. The sequence is that of Pentafunctional AROM polypeptide from Mycosarcoma maydis (Corn smut fungus).